Here is a 564-residue protein sequence, read N- to C-terminus: Probable lysosomal cobalamin transporter (564 aa).

A run of 9 helical transmembrane segments spans residues 8 to 28 (LIWS…STFI), 41 to 61 (VTLI…LLPV), 94 to 114 (TIVY…GIPF), 144 to 164 (YTLF…FIPT), 188 to 208 (ALTF…IIYT), 312 to 332 (LLAG…LCVT), 375 to 395 (VIFT…IAAF), 418 to 438 (LLLT…VAVI), and 506 to 526 (FFGA…LLVL).

Belongs to the LIMR family. LMBRD1 subfamily.

The protein resides in the lysosome membrane. Probable lysosomal cobalamin transporter. Required to export cobalamin from lysosomes allowing its conversion to cofactors. In Aspergillus clavatus (strain ATCC 1007 / CBS 513.65 / DSM 816 / NCTC 3887 / NRRL 1 / QM 1276 / 107), this protein is Probable lysosomal cobalamin transporter.